A 410-amino-acid chain; its full sequence is Multifunctional CCA protein (410 aa).

2 residues coordinate ATP: glycine 8 and arginine 11. The CTP site is built by glycine 8 and arginine 11. 2 residues coordinate Mg(2+): aspartate 21 and aspartate 23. ATP-binding residues include arginine 91, arginine 138, and arginine 141. Arginine 91, arginine 138, and arginine 141 together coordinate CTP. An HD domain is found at 229–347 (TGIHQEMVSD…AQLALVCEAD (119 aa)).

This sequence belongs to the tRNA nucleotidyltransferase/poly(A) polymerase family. Bacterial CCA-adding enzyme type 1 subfamily. As to quaternary structure, monomer. Can also form homodimers and oligomers. It depends on Mg(2+) as a cofactor. The cofactor is Ni(2+).

The enzyme catalyses a tRNA precursor + 2 CTP + ATP = a tRNA with a 3' CCA end + 3 diphosphate. It carries out the reaction a tRNA with a 3' CCA end + 2 CTP + ATP = a tRNA with a 3' CCACCA end + 3 diphosphate. Functionally, catalyzes the addition and repair of the essential 3'-terminal CCA sequence in tRNAs without using a nucleic acid template. Adds these three nucleotides in the order of C, C, and A to the tRNA nucleotide-73, using CTP and ATP as substrates and producing inorganic pyrophosphate. tRNA 3'-terminal CCA addition is required both for tRNA processing and repair. Also involved in tRNA surveillance by mediating tandem CCA addition to generate a CCACCA at the 3' terminus of unstable tRNAs. While stable tRNAs receive only 3'-terminal CCA, unstable tRNAs are marked with CCACCA and rapidly degraded. This is Multifunctional CCA protein from Xanthomonas axonopodis pv. citri (strain 306).